We begin with the raw amino-acid sequence, 572 residues long: Proline--tRNA ligase (572 aa).

Belongs to the class-II aminoacyl-tRNA synthetase family. ProS type 1 subfamily. In terms of assembly, homodimer.

The protein localises to the cytoplasm. It catalyses the reaction tRNA(Pro) + L-proline + ATP = L-prolyl-tRNA(Pro) + AMP + diphosphate. Catalyzes the attachment of proline to tRNA(Pro) in a two-step reaction: proline is first activated by ATP to form Pro-AMP and then transferred to the acceptor end of tRNA(Pro). As ProRS can inadvertently accommodate and process non-cognate amino acids such as alanine and cysteine, to avoid such errors it has two additional distinct editing activities against alanine. One activity is designated as 'pretransfer' editing and involves the tRNA(Pro)-independent hydrolysis of activated Ala-AMP. The other activity is designated 'posttransfer' editing and involves deacylation of mischarged Ala-tRNA(Pro). The misacylated Cys-tRNA(Pro) is not edited by ProRS. This Salmonella dublin (strain CT_02021853) protein is Proline--tRNA ligase.